The chain runs to 86 residues: Small ribosomal subunit protein bS20 (86 aa).

Residues 1 to 27 are compositionally biased toward basic residues; it reads MANSKSAKKRATQAERRRQHNASRRSM. A disordered region spans residues 1 to 28; it reads MANSKSAKKRATQAERRRQHNASRRSMM.

The protein belongs to the bacterial ribosomal protein bS20 family.

Its function is as follows. Binds directly to 16S ribosomal RNA. In Aliivibrio salmonicida (strain LFI1238) (Vibrio salmonicida (strain LFI1238)), this protein is Small ribosomal subunit protein bS20.